Consider the following 543-residue polypeptide: Probable protein kinase UbiB (543 aa).

The Protein kinase domain occupies 123 to 501 (DFDSQALASA…GSRQGRARYL (379 aa)). ATP-binding positions include 129 to 137 (LASASIAQV) and lysine 152. Aspartate 287 functions as the Proton acceptor in the catalytic mechanism. Residues 517–537 (MVNIALWPIGLYVAGGVIWLA) traverse the membrane as a helical segment.

This sequence belongs to the ABC1 family. UbiB subfamily.

It localises to the cell inner membrane. It functions in the pathway cofactor biosynthesis; ubiquinone biosynthesis [regulation]. Functionally, is probably a protein kinase regulator of UbiI activity which is involved in aerobic coenzyme Q (ubiquinone) biosynthesis. The chain is Probable protein kinase UbiB from Edwardsiella ictaluri (strain 93-146).